The following is a 364-amino-acid chain: Methylthioribose-1-phosphate isomerase (364 aa).

Residues 49–51 (RGA), Arg-89, and Gln-201 contribute to the substrate site. Residue Asp-242 is the Proton donor of the active site. 252-253 (NK) provides a ligand contact to substrate.

The protein belongs to the eIF-2B alpha/beta/delta subunits family. MtnA subfamily.

It catalyses the reaction 5-(methylsulfanyl)-alpha-D-ribose 1-phosphate = 5-(methylsulfanyl)-D-ribulose 1-phosphate. It participates in amino-acid biosynthesis; L-methionine biosynthesis via salvage pathway; L-methionine from S-methyl-5-thio-alpha-D-ribose 1-phosphate: step 1/6. In terms of biological role, catalyzes the interconversion of methylthioribose-1-phosphate (MTR-1-P) into methylthioribulose-1-phosphate (MTRu-1-P). This is Methylthioribose-1-phosphate isomerase from Leptospira interrogans serogroup Icterohaemorrhagiae serovar Lai (strain 56601).